The primary structure comprises 361 residues: 4-hydroxytryptamine kinase (361 aa).

ATP-binding positions include Asn-37, Lys-57, and 118–120 (QDV). Asp-224 is a catalytic residue. ATP is bound at residue 248–250 (DWE).

This sequence belongs to the methylthioribose kinase family. In terms of assembly, monomer. It depends on Mg(2+) as a cofactor.

It carries out the reaction 4-hydroxytryptamine + ATP = norbaeocystin + ADP + H(+). The catalysed reaction is psilocin + ATP = psilocybin + ADP + H(+). The enzyme catalyses 4-hydroxy-N,N,N-trimethyltryptamine + ATP = aeruginascin + ADP + H(+). The protein operates within secondary metabolite biosynthesis. Functionally, 4-hydroxytryptamine kinase; part of the gene cluster that mediates the biosynthesis of psilocybin, a psychotropic tryptamine-derived natural product. The first step in the pathway is the decarboxylation of L-tryptophan to tryptamine by the decarboxylase psiD. PsiD does not decarboxylate phenylalanine, tyrosine, or 5-hydroxy- L -tryptophan (5-HTP). 4-hydroxy-L-tryptophan is accepted as substrate by psiD as well. The cytochrome P450 monooxygenase psiH then converts tryptamine to 4-hydroxytryptamine. The kinase psiK catalyzes the 4-O-phosphorylation step by converting 4-hydroxytryptamine into norbaeocystin. The methyltransferase psiM then catalyzes iterative methyl transfer to the amino group of norbaeocystin to yield psilocybin via a monomethylated intermediate, baeocystin. 4-hydroxy-6-methyl-l-tryptophancan also be converted the decarboxylase PsiD, kinase PsiK, and methyltransferase PsiM into respectively 6-methyl-norbaeocystin, 6-methylbaeocystin, and 6-methylpsilocybin. PsiK kinase can also turn psilocin into psilocybin. This activity may represent a protective mechanism to rephosphorylate the unstable psilocin to the stable psilocybin in case of intracellular ester cleavage. Moreover, psiK is able to O-phosphorylate the quaternary amine 4-hydroxy-N,N,N-trimethyltryptamine (4-OH-TMT) to yield aeruginascin, another bioactive compound found in Psilocybe species. This is 4-hydroxytryptamine kinase from Psilocybe cyanescens.